Here is a 542-residue protein sequence, read N- to C-terminus: MFS-type efflux pump MMF1 (542 aa).

8 consecutive transmembrane segments (helical) span residues 24–44 (WTIF…MTMI), 51–71 (IVAA…AFLL), 98–118 (VIFL…VLVV), 124–144 (GLGG…LTTL), 151–171 (FGLI…LGGV), 179–199 (WIFW…VLFL), 215–235 (LDLV…IAVT), and 248–268 (VWVP…VEWI). N-linked (GlcNAc...) asparagine glycosylation occurs at Asn285. 6 helical membrane-spanning segments follow: residues 296–316 (FLHG…FQAI), 326–346 (IWSF…GLLI), 355–375 (LIFI…HWSV), 384–404 (ISQI…LPPI), 419–439 (AYAF…TTIF), and 490–510 (ISDS…STFL).

It belongs to the major facilitator superfamily.

It is found in the cell membrane. Its function is as follows. Glycosyltransferase; part of the gene cluster that mediates the biosynthesis of mannosylerythritol lipids (MELs), surface-active substances that enhance the availability of water-insoluble substrates. MMF1 is directly involved in the secretiopn of MALs. This Pseudozyma antarctica (strain T-34) (Yeast) protein is MFS-type efflux pump MMF1.